The chain runs to 78 residues: UPF0349 protein BLi03401/BL03152 (78 aa).

The protein belongs to the UPF0349 family.

The sequence is that of UPF0349 protein BLi03401/BL03152 from Bacillus licheniformis (strain ATCC 14580 / DSM 13 / JCM 2505 / CCUG 7422 / NBRC 12200 / NCIMB 9375 / NCTC 10341 / NRRL NRS-1264 / Gibson 46).